A 165-amino-acid polypeptide reads, in one-letter code: Choriogonadotropin subunit beta 3 (165 aa).

The first 20 residues, 1–20, serve as a signal peptide directing secretion; that stretch reads MEMFQGLLLLLLLSMGGTWA. Disulfide bonds link C29–C77, C43–C92, C46–C130, C54–C108, C58–C110, and C113–C120. N33 and N50 each carry an N-linked (GlcNAc...) asparagine glycan. Residues 131-165 are disordered; sequence DDPRFQDSSSSKAPPPSLPSPSRLPGPSDTPILPQ. O-linked (GalNAc...) serine glycans are attached at residues S141, S147, S152, and S158. The span at 143 to 154 shows a compositional bias: pro residues; that stretch reads APPPSLPSPSRL.

This sequence belongs to the glycoprotein hormones subunit beta family. As to quaternary structure, heterodimer of a common alpha chain identical in LH, FSH, TSH and HCG and a unique beta chain distinct in each of the hormones. High expression in the placenta throughout pregnancy.

The protein localises to the secreted. Functionally, beta subunit of the human chorionic gonadotropin (hCG). hCG is a complex glycoprotein composed of two glycosylated subunits alpha and beta which are non-covalently associated. The alpha subunit is identical to those in the pituitary gonadotropin hormones (LH, FSH and TSH). The beta subunits are distinct in each of the hormones and confer receptor and biological specificity. Has an essential role in pregnancy and maternal adaptation. Stimulates the ovaries to synthesize the steroids that are essential for the maintenance of pregnancy. This chain is Choriogonadotropin subunit beta 3 (CGB3), found in Homo sapiens (Human).